We begin with the raw amino-acid sequence, 213 residues long: Thymidylate kinase (213 aa).

10 to 17 (GLEGAGKT) provides a ligand contact to ATP.

Belongs to the thymidylate kinase family.

The enzyme catalyses dTMP + ATP = dTDP + ADP. In terms of biological role, phosphorylation of dTMP to form dTDP in both de novo and salvage pathways of dTTP synthesis. The chain is Thymidylate kinase from Escherichia coli O6:K15:H31 (strain 536 / UPEC).